The sequence spans 646 residues: Phosphomethylpyrimidine synthase (646 aa).

The span at 1–13 (MNIRSNPDTTRPA) shows a compositional bias: polar residues. The tract at residues 1–21 (MNIRSNPDTTRPAVTTGGLPS) is disordered. Substrate-binding positions include asparagine 221, methionine 250, tyrosine 279, histidine 315, 335-337 (SRG), 376-379 (DGLR), and glutamate 415. Position 419 (histidine 419) interacts with Zn(2+). Tyrosine 442 lines the substrate pocket. Residue histidine 483 participates in Zn(2+) binding. [4Fe-4S] cluster contacts are provided by cysteine 563, cysteine 566, and cysteine 571.

Belongs to the ThiC family. Homodimer. Requires [4Fe-4S] cluster as cofactor.

The catalysed reaction is 5-amino-1-(5-phospho-beta-D-ribosyl)imidazole + S-adenosyl-L-methionine = 4-amino-2-methyl-5-(phosphooxymethyl)pyrimidine + CO + 5'-deoxyadenosine + formate + L-methionine + 3 H(+). The protein operates within cofactor biosynthesis; thiamine diphosphate biosynthesis. Functionally, catalyzes the synthesis of the hydroxymethylpyrimidine phosphate (HMP-P) moiety of thiamine from aminoimidazole ribotide (AIR) in a radical S-adenosyl-L-methionine (SAM)-dependent reaction. The sequence is that of Phosphomethylpyrimidine synthase from Rhodopseudomonas palustris (strain HaA2).